Consider the following 236-residue polypeptide: Osmoprotectant import permease protein OsmY (236 aa).

6 helical membrane-spanning segments follow: residues Val-9 to Leu-29, Leu-47 to Leu-67, Val-95 to Phe-115, Thr-126 to Met-146, Pro-180 to Leu-200, and Ile-207 to Phe-227. Residues Gly-43–Leu-224 form the ABC transmembrane type-1 domain.

The protein belongs to the binding-protein-dependent transport system permease family. In terms of assembly, the complex is composed of two ATP-binding proteins (OsmV), two transmembrane proteins (OsmW and OsmY) and a solute-binding protein (OsmX).

It is found in the cell inner membrane. Part of the OsmU ABC transporter complex, which is involved in the uptake of osmoprotectants such as choline-O-sulfate and glycine betaine. Probably responsible for the translocation of the substrate across the membrane. The polypeptide is Osmoprotectant import permease protein OsmY (osmY) (Salmonella typhimurium (strain LT2 / SGSC1412 / ATCC 700720)).